A 795-amino-acid chain; its full sequence is Phenylalanine--tRNA ligase beta subunit (795 aa).

Positions 39-148 constitute a tRNA-binding domain; it reads AGEFNGVVVG…ADAPVGKDFR (110 aa). The region spanning 401-476 is the B5 domain; it reads PKLNKVQLRR…RIYGYNSIPN (76 aa). Residues D454, D460, E463, and E464 each coordinate Mg(2+). Residues 701 to 794 enclose the FDX-ACB domain; it reads SKFPANKRDL…LKDRFNAYLR (94 aa).

It belongs to the phenylalanyl-tRNA synthetase beta subunit family. Type 1 subfamily. As to quaternary structure, tetramer of two alpha and two beta subunits. Mg(2+) serves as cofactor.

Its subcellular location is the cytoplasm. It carries out the reaction tRNA(Phe) + L-phenylalanine + ATP = L-phenylalanyl-tRNA(Phe) + AMP + diphosphate + H(+). The polypeptide is Phenylalanine--tRNA ligase beta subunit (Mannheimia succiniciproducens (strain KCTC 0769BP / MBEL55E)).